The following is a 259-amino-acid chain: Bis(5'-nucleosyl)-tetraphosphatase, symmetrical (259 aa).

The protein belongs to the Ap4A hydrolase family.

The enzyme catalyses P(1),P(4)-bis(5'-adenosyl) tetraphosphate + H2O = 2 ADP + 2 H(+). Its function is as follows. Hydrolyzes diadenosine 5',5'''-P1,P4-tetraphosphate to yield ADP. This is Bis(5'-nucleosyl)-tetraphosphatase, symmetrical (apaH) from Klebsiella aerogenes (Enterobacter aerogenes).